We begin with the raw amino-acid sequence, 211 residues long: Large ribosomal subunit protein uL3 (211 aa).

Glutamine 150 carries the post-translational modification N5-methylglutamine.

This sequence belongs to the universal ribosomal protein uL3 family. Part of the 50S ribosomal subunit. Forms a cluster with proteins L14 and L19. Methylated by PrmB.

Its function is as follows. One of the primary rRNA binding proteins, it binds directly near the 3'-end of the 23S rRNA, where it nucleates assembly of the 50S subunit. The polypeptide is Large ribosomal subunit protein uL3 (Pseudomonas putida (strain GB-1)).